Consider the following 123-residue polypeptide: Integration host factor subunit alpha (123 aa).

A disordered region spans residues 97–123; that stretch reads NANGTASSMSSSANAAAGDKSESASGT. The segment covering 102 to 113 has biased composition (low complexity); that stretch reads ASSMSSSANAAA.

This sequence belongs to the bacterial histone-like protein family. Heterodimer of an alpha and a beta chain.

In terms of biological role, this protein is one of the two subunits of integration host factor, a specific DNA-binding protein that functions in genetic recombination as well as in transcriptional and translational control. In Rhodopseudomonas palustris (strain HaA2), this protein is Integration host factor subunit alpha.